A 112-amino-acid polypeptide reads, in one-letter code: MSDTIPSCEACRPDAEKVDPAKLEKYLSQVPEWRLEERNGVQMISRDYKFKNFALALEFTNKVGAIAEEINHHPELVTEWGKVRVTWWSHTIKGLHELDFAMAKRCEAVFNA.

Belongs to the pterin-4-alpha-carbinolamine dehydratase family.

The enzyme catalyses (4aS,6R)-4a-hydroxy-L-erythro-5,6,7,8-tetrahydrobiopterin = (6R)-L-erythro-6,7-dihydrobiopterin + H2O. This chain is Putative pterin-4-alpha-carbinolamine dehydratase, found in Hahella chejuensis (strain KCTC 2396).